A 235-amino-acid polypeptide reads, in one-letter code: Segregation and condensation protein A (235 aa).

It belongs to the ScpA family. As to quaternary structure, component of a cohesin-like complex composed of ScpA, ScpB and the Smc homodimer, in which ScpA and ScpB bind to the head domain of Smc. The presence of the three proteins is required for the association of the complex with DNA.

Its subcellular location is the cytoplasm. Its function is as follows. Participates in chromosomal partition during cell division. May act via the formation of a condensin-like complex containing Smc and ScpB that pull DNA away from mid-cell into both cell halves. In Streptococcus equi subsp. zooepidemicus (strain MGCS10565), this protein is Segregation and condensation protein A.